A 654-amino-acid polypeptide reads, in one-letter code: Fructose-1,6-bisphosphatase class 3 (654 aa).

The segment at 288–307 (NPAFKPKKRPDKHERLTQRE) is disordered. Basic and acidic residues predominate over residues 298 to 307 (DKHERLTQRE).

The protein belongs to the FBPase class 3 family. It depends on Mn(2+) as a cofactor.

It catalyses the reaction beta-D-fructose 1,6-bisphosphate + H2O = beta-D-fructose 6-phosphate + phosphate. Its pathway is carbohydrate biosynthesis; gluconeogenesis. The protein is Fructose-1,6-bisphosphatase class 3 of Staphylococcus aureus (strain MSSA476).